The primary structure comprises 321 residues: MKKNFYTISKTMSRSLKLILFSVFIGFSIFLIPQPTWAYPFWAQQKFENPREATGKIVCANCHVASMPTRAEVPQAVAADSVFKTVVEIPYKKDLQEIGADGSKVPLQVGAVVMLPDGFKLAPQERWTDEIKEETQGVYFTQYSEEQENIILVGPLPGDQNREIVFPVLSPDPRKDSNYNFGKYSIHVGGNRGRGQVYPTGEKSNNNLFTATNSGTITSIETNEDGTQIINLNNEEGESFTENLPAGTSLLIKEGDTIEKGAKLTEDPNVGGFGQLDKEIVLQSKARVIGMIIFFIGVGLSQIMLVLKKKQVEKVQAAEGI.

An N-terminal signal peptide occupies residues 1-38; sequence MKKNFYTISKTMSRSLKLILFSVFIGFSIFLIPQPTWA. Positions 39, 59, 62, and 63 each coordinate heme. Residues 288–308 traverse the membrane as a helical segment; it reads VIGMIIFFIGVGLSQIMLVLK.

The protein belongs to the cytochrome f family. The 4 large subunits of the cytochrome b6-f complex are cytochrome b6, subunit IV (17 kDa polypeptide, PetD), cytochrome f and the Rieske protein, while the 4 small subunits are PetG, PetL, PetM and PetN. The complex functions as a dimer. It depends on heme as a cofactor.

The protein resides in the cellular thylakoid membrane. Functionally, component of the cytochrome b6-f complex, which mediates electron transfer between photosystem II (PSII) and photosystem I (PSI), cyclic electron flow around PSI, and state transitions. This Prochlorococcus marinus (strain NATL1A) protein is Cytochrome f.